The primary structure comprises 1125 residues: Probable phospholipid-transporting ATPase IIB (1125 aa).

The Cytoplasmic portion of the chain corresponds to 1–131; that stretch reads MADGIPLNPV…IKNQKYNIVT (131 aa). Residues 132–152 form a helical membrane-spanning segment; that stretch reads FVPGVLYQQFKFFLNLYFLVV. Residues 153–161 lie on the Extracellular side of the membrane; sequence ACSQFVPSL. Residues 162-182 form a helical membrane-spanning segment; the sequence is KIGYLYTYWAPLGFVLAVTMV. Residues 183–369 are Cytoplasmic-facing; that stretch reads REAVDEVRRC…LDLELNRLTK (187 aa). Residues 370 to 390 form a helical membrane-spanning segment; that stretch reads ALFLAQVVLSVVMVALQGFLG. Residues 391-395 lie on the Extracellular side of the membrane; that stretch reads PWFRN. Residues 396–415 form a helical membrane-spanning segment; it reads LFRFVVLFSYIIPISLRVNL. Residues 416-928 are Cytoplasmic-facing; sequence DMGKSAYGWM…ALGQFVMHRG (513 aa). The active-site 4-aspartylphosphate intermediate is D455. ATP-binding residues include D455, K456, and T457. Residue D455 participates in Mg(2+) binding. T457 lines the Mg(2+) pocket. Positions 500-511 are enriched in low complexity; sequence QSNGSSASSTPS. Disordered regions lie at residues 500-525 and 552-574; these read QSNG…RKSV and GANA…RTYQ. The segment covering 558-567 has biased composition (acidic residues); it reads ESTEADQDFS. E580, F622, K627, K646, R675, T676, T755, G756, D757, R837, and K843 together coordinate ATP. D863 contributes to the Mg(2+) binding site. ATP-binding residues include N866 and D867. Residue D867 participates in Mg(2+) binding. The helical transmembrane segment at 929–949 threads the bilayer; the sequence is MIISTMQAVFSSIFYFASVPL. Residues 950–951 are Extracellular-facing; it reads YQ. The chain crosses the membrane as a helical span at residues 952 to 972; it reads GFLMVGYATIYTMFPVFSLVL. Topologically, residues 973 to 1001 are cytoplasmic; the sequence is DQDVKPEMALLYPELYKDLTKGRSLSFKT. The chain crosses the membrane as a helical span at residues 1002–1022; sequence FLIWVLISIYQGGILMYGALV. Topologically, residues 1023-1030 are extracellular; the sequence is LFDQEFVH. The chain crosses the membrane as a helical span at residues 1031-1051; that stretch reads VVAISFTALILTELLMVALTI. Residues 1052–1055 lie on the Cytoplasmic side of the membrane; the sequence is RTWH. A helical membrane pass occupies residues 1056–1076; that stretch reads WLMVVAQLISLACYLASLAFL. Residues 1077 to 1088 lie on the Extracellular side of the membrane; sequence NEYFDLSFITTR. Residues 1089-1109 traverse the membrane as a helical segment; the sequence is VFLWKVCVITLVSCLPLYIIK. Over 1110–1125 the chain is Cytoplasmic; sequence YLKRKFSPPSYSKLSS.

Belongs to the cation transport ATPase (P-type) (TC 3.A.3) family. Type IV subfamily. Mg(2+) serves as cofactor.

Its subcellular location is the golgi apparatus. The protein localises to the trans-Golgi network membrane. The enzyme catalyses ATP + H2O + phospholipidSide 1 = ADP + phosphate + phospholipidSide 2.. In Danio rerio (Zebrafish), this protein is Probable phospholipid-transporting ATPase IIB (atp9b).